A 264-amino-acid chain; its full sequence is Thymidylate synthase (264 aa).

Arginine 21 contributes to the dUMP binding site. (6R)-5,10-methylene-5,6,7,8-tetrahydrofolate is bound at residue histidine 51. A dUMP-binding site is contributed by 126–127 (RR). Residue cysteine 146 is the Nucleophile of the active site. DUMP-binding positions include 166-169 (RSCD), asparagine 177, and 207-209 (HLY). (6R)-5,10-methylene-5,6,7,8-tetrahydrofolate is bound at residue aspartate 169. Alanine 263 is a binding site for (6R)-5,10-methylene-5,6,7,8-tetrahydrofolate.

It belongs to the thymidylate synthase family. Bacterial-type ThyA subfamily. As to quaternary structure, homodimer.

It is found in the cytoplasm. It catalyses the reaction dUMP + (6R)-5,10-methylene-5,6,7,8-tetrahydrofolate = 7,8-dihydrofolate + dTMP. The protein operates within pyrimidine metabolism; dTTP biosynthesis. Its function is as follows. Catalyzes the reductive methylation of 2'-deoxyuridine-5'-monophosphate (dUMP) to 2'-deoxythymidine-5'-monophosphate (dTMP) while utilizing 5,10-methylenetetrahydrofolate (mTHF) as the methyl donor and reductant in the reaction, yielding dihydrofolate (DHF) as a by-product. This enzymatic reaction provides an intracellular de novo source of dTMP, an essential precursor for DNA biosynthesis. The polypeptide is Thymidylate synthase (Pectobacterium carotovorum subsp. carotovorum (strain PC1)).